A 572-amino-acid chain; its full sequence is Solute carrier family 22 member 16 (572 aa).

Residues 21-41 (IFLYFICAFQNISCGIHYLAS) traverse the membrane as a helical segment. N57 carries N-linked (GlcNAc...) asparagine glycosylation. Helical transmembrane passes span 156-176 (LIQPTFMFGVLLGAVIFGYLS), 183-203 (LVLWASSTGVFLFGIAAAFTF), 208-228 (FIVARFLLAISGSGYLVVVFV), 244-264 (IHLHSFFAFGTMVVALTGYFV), and 268-288 (WIYQIVLSSVTVPFVLCCWML). A glycan (N-linked (GlcNAc...) asparagine) is linked at N315. A run of 6 helical transmembrane segments spans residues 359-379 (TLILWLIWFTGCLGFYTFSLN), 389-409 (LNLFLMGVVEIPAYVLVCLGM), 416-436 (NILIFSLLSSAVTSGVIMVIP), 441-461 (VWLVVASMAGKFFIGAAFGLI), 476-496 (LAVGSGSTVGRVGSIVAPLCI), and 503-523 (IFMPQLLVGTLALVSGVLTFL). N559 carries N-linked (GlcNAc...) asparagine glycosylation.

Belongs to the major facilitator (TC 2.A.1) superfamily. Organic cation transporter (TC 2.A.1.19) family.

It localises to the cell membrane. It catalyses the reaction (R)-carnitine(in) = (R)-carnitine(out). The catalysed reaction is spermidine(in) = spermidine(out). In terms of biological role, facilitative organic cation transporter that mediates the transport of carnitine as well as the polyamine spermidine. Mediates the partially Na(+)-dependent bidirectional transport of carnitine. May mediate L-carnitine secretion from testis epididymal epithelium into the lumen which is involved in the maturation of spermatozoa. The sequence is that of Solute carrier family 22 member 16 (SLC22A16) from Bos taurus (Bovine).